The sequence spans 798 residues: ATP-dependent RNA helicase bel (798 aa).

The disordered stretch occupies residues 16-248 (VAGLDLNGGS…SRWKEGGGSN (233 aa)). Residues 31-42 (PITSKTSTNSVT) show a composition bias toward polar residues. Composition is skewed to gly residues over residues 94 to 110 (RGGGGEYRRGGGGGGRG), 118 to 132 (YGYGSGGGGRRGGGG), and 154 to 178 (SGGGGGGGRGFGRGPSYRGGGGGSG). Phosphoserine occurs at positions 177 and 179. Basic and acidic residues predominate over residues 198–209 (RNDRWQEPERPA). Ser-214 and Ser-219 each carry phosphoserine. Residues 295–323 (TSFDDVQLTEIIRNNVALARYDKPTPVQK) carry the Q motif motif. ATP-binding positions include 315–322 (YDKPTPVQ) and 339–346 (AQTGSGKT). The region spanning 326–515 (IPIIINGRDL…SDFLSNYIFL (190 aa)) is the Helicase ATP-binding domain. A DEAD box motif is present at residues 459–462 (DEAD). In terms of domain architecture, Helicase C-terminal spans 542–693 (YLLDLLSSIR…EIPSFMEDMS (152 aa)). Position 638 is a phosphoserine (Ser-638). Disordered stretches follow at residues 689–765 (MEDM…SGGG) and 778–798 (GGSYGGGSASHSSNAPDWWAQ). Gly residues-rich tracts occupy residues 706–717 (RGGGGRYGGGFG) and 740–750 (GGSGSGGGGGS).

It belongs to the DEAD box helicase family. DDX3/DED1 subfamily. Vas and bel colocalize in nuage (perinuclear, electron-dense granules in germline cells) and at the oocyte posterior during oogenesis.

Its subcellular location is the cytoplasm. It catalyses the reaction ATP + H2O = ADP + phosphate + H(+). ATP-dependent RNA helicase that is essential and required for cellular function, larval growth, and for male and female fertility. Also required for RNA interference (RNAi), double-stranded RNA induces potent and specific gene silencing, by acting downstream of dsRNA internalization. RNAi is mediated by the RNA-induced silencing complex (RISC), a sequence-specific, multicomponent nuclease that destroys or silences messenger RNAs homologous to the silencing trigger. This chain is ATP-dependent RNA helicase bel, found in Drosophila melanogaster (Fruit fly).